The following is a 152-amino-acid chain: Ribosome maturation factor RimP (152 aa).

Belongs to the RimP family.

The protein localises to the cytoplasm. Its function is as follows. Required for maturation of 30S ribosomal subunits. This Porphyromonas gingivalis (strain ATCC BAA-308 / W83) protein is Ribosome maturation factor RimP.